The following is a 49-amino-acid chain: Large ribosomal subunit protein bL32c (49 aa).

The disordered stretch occupies residues 1–23; the sequence is MTPKKRKSKSKKNLRKTNWKKKA.

This sequence belongs to the bacterial ribosomal protein bL32 family.

It is found in the plastid. Its subcellular location is the chloroplast. The sequence is that of Large ribosomal subunit protein bL32c from Oltmannsiellopsis viridis (Marine flagellate).